The sequence spans 283 residues: MIINHNLSAVNAHRSLKFNELAVDKTMKALSSGMRINSAADDASGLAVSEKLRTQINGLRQAERNTEDGMSFIQTAEGFLEQTSNIIQRIRVLAIQTSNGIYSNEDRQLVQVEVSALVDEVDRIASQAEFNKFKLFEGQFARGSRVASMWFHMGPNQNQRERFYIGTMTSKALKLVKADGRPIAISSPGEANDVIGLADAALTKIMKQRADMGAYYNRLEYTAKGLMGAYENMQASESRIRDADMAEEVVSLTTKQILVQSGTAMLAQANMKPNSVLKLLQQI.

Belongs to the bacterial flagellin family. As to quaternary structure, the flagellum consists of two outer layers around a core that contains several antigenically related polypeptides.

Its subcellular location is the periplasmic flagellum. It is found in the periplasm. In terms of biological role, component of the core of the flagella. The sequence is that of Flagellar filament 35 kDa core protein (flaB) from Leptospira interrogans serogroup Icterohaemorrhagiae serovar Lai (strain 56601).